A 476-amino-acid chain; its full sequence is Lipase (476 aa).

The N-terminal stretch at 1 to 23 (MGIFDYKNLGTEGSKTLFADAMA) is a signal peptide. The active-site Charge relay system is the serine 207. Hemolysin-type calcium-binding repeat units follow at residues 372–389 (IGSD…ADFI), 390–407 (EGGK…HNTF), and 410–427 (SGHF…TDKL). Aspartate 437, aspartate 440, and aspartate 448 together coordinate Ca(2+).

It belongs to the AB hydrolase superfamily. Lipase family.

The catalysed reaction is a triacylglycerol + H2O = a diacylglycerol + a fatty acid + H(+). The sequence is that of Lipase from Pseudomonas fluorescens.